A 389-amino-acid chain; its full sequence is Chalcone synthase 2 (389 aa).

Cysteine 164 is an active-site residue.

It belongs to the thiolase-like superfamily. Chalcone/stilbene synthases family.

The catalysed reaction is (E)-4-coumaroyl-CoA + 3 malonyl-CoA + 3 H(+) = 2',4,4',6'-tetrahydroxychalcone + 3 CO2 + 4 CoA. It participates in secondary metabolite biosynthesis; flavonoid biosynthesis. Its function is as follows. The primary product of this enzyme is 4,2',4',6'-tetrahydroxychalcone (also termed naringenin-chalcone or chalcone) which can under specific conditions spontaneously isomerize into naringenin. The sequence is that of Chalcone synthase 2 (CHS2) from Solanum lycopersicum (Tomato).